Consider the following 228-residue polypeptide: Putative adhesin RBE_1271 (228 aa).

The N-terminal stretch at 1–22 (MKKLLLIAATSATVLSSALSFA) is a signal peptide.

This chain is Putative adhesin RBE_1271, found in Rickettsia bellii (strain RML369-C).